Here is a 95-residue protein sequence, read N- to C-terminus: Signal recognition particle 19 kDa protein (95 aa).

The protein belongs to the SRP19 family. As to quaternary structure, part of the signal recognition particle protein translocation system, which is composed of SRP and FtsY. Archaeal SRP consists of a 7S RNA molecule of 300 nucleotides and two protein subunits: SRP54 and SRP19.

Its subcellular location is the cytoplasm. Functionally, involved in targeting and insertion of nascent membrane proteins into the cytoplasmic membrane. Binds directly to 7S RNA and mediates binding of the 54 kDa subunit of the SRP. This Staphylothermus marinus (strain ATCC 43588 / DSM 3639 / JCM 9404 / F1) protein is Signal recognition particle 19 kDa protein.